The primary structure comprises 486 residues: Scarecrow-like protein 15 (486 aa).

Positions Met1–Met28 are disordered. A compositionally biased stretch (low complexity) spans Asp10–Asn24. Positions Asp113–Arg485 constitute a GRAS domain. The tract at residues Phe120–Asn179 is leucine repeat I (LRI). The interval Ile198–Ala266 is VHIID. The VHIID motif lies at Val232–Asp236. Positions Leu278–Lys310 are leucine repeat II (LRII). The segment at Thr320 to Ala410 is PFYRE. Positions Glu413 to Arg485 are SAW.

It belongs to the GRAS family. As to expression, expressed in seedlings, roots, leaves and flowers.

Its subcellular location is the nucleus. In terms of biological role, probable transcription factor involved in plant development. This is Scarecrow-like protein 15 (SCL15) from Arabidopsis thaliana (Mouse-ear cress).